The primary structure comprises 502 residues: Arginine decarboxylase (502 aa).

At lysine 42 the chain carries N6-(pyridoxal phosphate)lysine. 226 to 236 (IDIGGGLGIDY) is a binding site for substrate.

This sequence belongs to the Orn/Lys/Arg decarboxylase class-II family. SpeA subfamily. It depends on pyridoxal 5'-phosphate as a cofactor. Mg(2+) serves as cofactor.

The enzyme catalyses L-arginine + H(+) = agmatine + CO2. It functions in the pathway amine and polyamine biosynthesis; agmatine biosynthesis; agmatine from L-arginine: step 1/1. This Solanum lycopersicum (Tomato) protein is Arginine decarboxylase.